Here is a 347-residue protein sequence, read N- to C-terminus: UDP-3-O-acylglucosamine N-acyltransferase 1 (347 aa).

Catalysis depends on H246, which acts as the Proton acceptor.

It belongs to the transferase hexapeptide repeat family. LpxD subfamily. Homotrimer.

It catalyses the reaction a UDP-3-O-[(3R)-3-hydroxyacyl]-alpha-D-glucosamine + a (3R)-hydroxyacyl-[ACP] = a UDP-2-N,3-O-bis[(3R)-3-hydroxyacyl]-alpha-D-glucosamine + holo-[ACP] + H(+). It functions in the pathway bacterial outer membrane biogenesis; LPS lipid A biosynthesis. In terms of biological role, catalyzes the N-acylation of UDP-3-O-acylglucosamine using 3-hydroxyacyl-ACP as the acyl donor. Is involved in the biosynthesis of lipid A, a phosphorylated glycolipid that anchors the lipopolysaccharide to the outer membrane of the cell. The sequence is that of UDP-3-O-acylglucosamine N-acyltransferase 1 from Francisella tularensis subsp. tularensis (strain SCHU S4 / Schu 4).